The sequence spans 598 residues: (-)-endo-fenchol synthase, chloroplastic (598 aa).

A chloroplast-targeting transit peptide spans 1–34 (MWSTISISMNVAILKKPLNFLHNSNNKASNPRCV). Residues D351, D355, D495, T499, and E503 each coordinate Mg(2+). Positions 351–355 (DDVYD) match the DDXXD motif motif.

The protein belongs to the terpene synthase family. The cofactor is Mg(2+). Requires Mn(2+) as cofactor.

It is found in the plastid. Its subcellular location is the chloroplast. It catalyses the reaction (2E)-geranyl diphosphate + H2O = (1S,2S,4R)-endo-fenchol + diphosphate. It participates in secondary metabolite biosynthesis; terpenoid biosynthesis. Its function is as follows. Monoterpene synthase that catalyzes the formation of fenchol from geranyl diphosphate. The chain is (-)-endo-fenchol synthase, chloroplastic (FES) from Ocimum basilicum (Sweet basil).